The primary structure comprises 456 residues: tRNA-2-methylthio-N(6)-dimethylallyladenosine synthase (456 aa).

The 119-residue stretch at 19–137 folds into the MTTase N-terminal domain; sequence KHFFIETWGC…FPEYLHRVQV (119 aa). [4Fe-4S] cluster is bound by residues cysteine 28, cysteine 64, cysteine 98, cysteine 174, cysteine 178, and cysteine 181. A Radical SAM core domain is found at 160 to 392; sequence RKSNVKAFVT…AVNEGIVVGN (233 aa). Positions 393-456 constitute a TRAM domain; that stretch reads KAAEGKIYEV…SFSLVGEVVE (64 aa).

It belongs to the methylthiotransferase family. MiaB subfamily. In terms of assembly, monomer. [4Fe-4S] cluster serves as cofactor.

The protein localises to the cytoplasm. The enzyme catalyses N(6)-dimethylallyladenosine(37) in tRNA + (sulfur carrier)-SH + AH2 + 2 S-adenosyl-L-methionine = 2-methylsulfanyl-N(6)-dimethylallyladenosine(37) in tRNA + (sulfur carrier)-H + 5'-deoxyadenosine + L-methionine + A + S-adenosyl-L-homocysteine + 2 H(+). Its function is as follows. Catalyzes the methylthiolation of N6-(dimethylallyl)adenosine (i(6)A), leading to the formation of 2-methylthio-N6-(dimethylallyl)adenosine (ms(2)i(6)A) at position 37 in tRNAs that read codons beginning with uridine. In Clostridium botulinum (strain Eklund 17B / Type B), this protein is tRNA-2-methylthio-N(6)-dimethylallyladenosine synthase.